The following is a 178-amino-acid chain: MARLKSLYNEELKQQIKEELGLANVMQVPKITKITLNMGVGGASQDKKLLEGAVADMTAIAGQKPVVTKARKSVAGFKIREEWPIGCKVTLRGEQMYEFLDRLIAIAIPRIRDFRGFSPKAFDGRGNYSLGIKEQIVFPEVDFDKIDRIRGMDVTITTSAQSDEEGRALLKAFGFPFK.

It belongs to the universal ribosomal protein uL5 family. As to quaternary structure, part of the 50S ribosomal subunit; part of the 5S rRNA/L5/L18/L25 subcomplex. Contacts the 5S rRNA and the P site tRNA. Forms a bridge to the 30S subunit in the 70S ribosome.

In terms of biological role, this is one of the proteins that bind and probably mediate the attachment of the 5S RNA into the large ribosomal subunit, where it forms part of the central protuberance. In the 70S ribosome it contacts protein S13 of the 30S subunit (bridge B1b), connecting the 2 subunits; this bridge is implicated in subunit movement. Contacts the P site tRNA; the 5S rRNA and some of its associated proteins might help stabilize positioning of ribosome-bound tRNAs. This chain is Large ribosomal subunit protein uL5, found in Psychrobacter cryohalolentis (strain ATCC BAA-1226 / DSM 17306 / VKM B-2378 / K5).